Consider the following 78-residue polypeptide: Dermaseptin-B1 (78 aa).

An N-terminal signal peptide occupies residues methionine 1–cysteine 22. A propeptide spanning residues glutamate 23–methionine 42 is cleaved from the precursor. Glutamine 75 bears the Glutamine amide mark. Residues glycine 76 to glutamine 78 constitute a propeptide that is removed on maturation.

The protein belongs to the frog skin active peptide (FSAP) family. Dermaseptin subfamily. In terms of tissue distribution, expressed by the skin glands.

It is found in the secreted. In terms of biological role, possesses a potent antimicrobial activity against bacteria, fungi and protozoa. Probably acts by disturbing membrane functions with its amphipathic structure. This is Dermaseptin-B1 from Phyllomedusa bicolor (Two-colored leaf frog).